A 565-amino-acid polypeptide reads, in one-letter code: NAD-dependent malic enzyme (565 aa).

Tyr-104 acts as the Proton donor in catalysis. NAD(+) is bound at residue Arg-157. Catalysis depends on Lys-175, which acts as the Proton acceptor. A divalent metal cation is bound by residues Glu-246, Asp-247, and Asp-270. NAD(+)-binding residues include Asp-270 and Asn-418.

This sequence belongs to the malic enzymes family. As to quaternary structure, homotetramer. Requires Mg(2+) as cofactor. Mn(2+) serves as cofactor.

The enzyme catalyses (S)-malate + NAD(+) = pyruvate + CO2 + NADH. It catalyses the reaction oxaloacetate + H(+) = pyruvate + CO2. The polypeptide is NAD-dependent malic enzyme (Photorhabdus laumondii subsp. laumondii (strain DSM 15139 / CIP 105565 / TT01) (Photorhabdus luminescens subsp. laumondii)).